The sequence spans 116 residues: uncharacterized protein (116 aa).

Residues 1–21 form the signal peptide; sequence MAPSTAMLIMGLLKLPRLRLA.

This is an uncharacterized protein from Saccharomyces cerevisiae (strain ATCC 204508 / S288c) (Baker's yeast).